A 479-amino-acid chain; its full sequence is Probable xyloglucan galactosyltransferase GT15 (479 aa).

Residues 1-20 are Cytoplasmic-facing; the sequence is MKNNNSSSVSIENHPWKKKP. A helical; Signal-anchor for type II membrane protein transmembrane segment spans residues 21-40; the sequence is TTLLLFLSLLSISLLLLRLS. Over 41–479 the chain is Lumenal; it reads QDKIILITTT…GIRRNEFKTD (439 aa). Asparagine 155, asparagine 242, asparagine 285, and asparagine 391 each carry an N-linked (GlcNAc...) asparagine glycan.

It belongs to the glycosyltransferase 47 family. Expressed in roots, hypocotyls, cotyledons, leaves, stems and sepals.

It localises to the golgi apparatus membrane. Functions in xyloglucan synthesis by adding side chains to the xylosylated glucan backbone. Involved in the galactosylation of hemicellulose xyloglucan. The polypeptide is Probable xyloglucan galactosyltransferase GT15 (Arabidopsis thaliana (Mouse-ear cress)).